Reading from the N-terminus, the 186-residue chain is Dirigent protein 4 (186 aa).

The first 20 residues, 1 to 20, serve as a signal peptide directing secretion; that stretch reads MGKNLGLVVSFYLCITFALG. N-linked (GlcNAc...) asparagine glycans are attached at residues N67, N126, N169, and N180.

Belongs to the plant dirigent protein family. As to quaternary structure, homodimer.

It localises to the secreted. It is found in the extracellular space. The protein resides in the apoplast. Functionally, dirigent proteins impart stereoselectivity on the phenoxy radical-coupling reaction, yielding optically active lignans from two molecules of coniferyl alcohol in the biosynthesis of lignans, flavonolignans, and alkaloids and thus plays a central role in plant secondary metabolism. This is Dirigent protein 4 (DIR4) from Arabidopsis thaliana (Mouse-ear cress).